Here is a 166-residue protein sequence, read N- to C-terminus: Ribosome biogenesis regulatory protein homolog (166 aa).

Residues Ser34 and Ser64 each carry the phosphoserine modification. Positions 144-166 are disordered; sequence KEKKLTSKQVRNTSKKIKRSRRH. A compositionally biased stretch (basic residues) spans 156-166; sequence TSKKIKRSRRH.

Belongs to the RRS1 family. In terms of assembly, component of a hexameric 5S RNP precursor complex, composed of 5S RNA, rrs1, rpf2, rpl5a/rpl5b, rpl11a/rpl11b and syo1; this complex acts as a precursor for ribosome assembly. Interacts with sad1.

It localises to the nucleus. The protein resides in the nucleolus. Its function is as follows. Involved in ribosomal large subunit assembly. The chain is Ribosome biogenesis regulatory protein homolog from Schizosaccharomyces pombe (strain 972 / ATCC 24843) (Fission yeast).